A 416-amino-acid polypeptide reads, in one-letter code: 2-amino-3-ketobutyrate coenzyme A ligase, mitochondrial (416 aa).

The transit peptide at 1 to 18 (MWASFMWHGALSPGRRAH) directs the protein to the mitochondrion. Lys-42 carries the N6-acetyllysine; alternate modification. Lys-42 is modified (N6-succinyllysine; alternate). Position 131 to 132 (131 to 132 (CF)) interacts with pyridoxal 5'-phosphate. His-156 serves as a coordination point for substrate. Residue Lys-184 is modified to N6-acetyllysine; alternate. N6-succinyllysine; alternate is present on Lys-184. Pyridoxal 5'-phosphate is bound by residues Ser-203, 259 to 262 (TLGK), and 292 to 293 (SN). The residue at position 262 (Lys-262) is an N6-(pyridoxal phosphate)lysine. N6-succinyllysine occurs at positions 323 and 365. Lys-380 is modified (N6-acetyllysine; alternate). At Lys-380 the chain carries N6-succinyllysine; alternate. Substrate is bound at residue Arg-386.

Belongs to the class-II pyridoxal-phosphate-dependent aminotransferase family. Pyridoxal 5'-phosphate serves as cofactor.

The protein resides in the mitochondrion. The protein localises to the nucleus. It catalyses the reaction glycine + acetyl-CoA = (2S)-2-amino-3-oxobutanoate + CoA. It functions in the pathway amino-acid degradation; L-threonine degradation via oxydo-reductase pathway; glycine from L-threonine: step 2/2. Its function is as follows. Pyridoxal phosphate (PLP) dependent enzyme, which catalyzes the cleavage of 2-amino-3-oxobutanoate to glycine and acetyl-CoA. Catalyzes the second reaction step on the main metabolic degradation pathway for L-threonine. The protein is 2-amino-3-ketobutyrate coenzyme A ligase, mitochondrial (Gcat) of Mus musculus (Mouse).